Here is a 385-residue protein sequence, read N- to C-terminus: Aldehyde dehydrogenase family 3 member B2 (385 aa).

107-112 is a binding site for NAD(+); sequence GSPRVG. Residues E129 and C163 contribute to the active site. C382 carries the post-translational modification Cysteine methyl ester. Residue C382 is the site of S-geranylgeranyl cysteine attachment. A propeptide spans 383–385 (removed in mature form); the sequence is TLL.

Belongs to the aldehyde dehydrogenase family. In terms of processing, geranylgeranylation is important for localization to lipid droplets and enzyme activity. As to expression, salivary gland. Expressed at protein level in placenta.

It localises to the lipid droplet. It carries out the reaction an aldehyde + NAD(+) + H2O = a carboxylate + NADH + 2 H(+). It catalyses the reaction a long-chain fatty aldehyde + NAD(+) + H2O = a long-chain fatty acid + NADH + 2 H(+). The enzyme catalyses a medium-chain fatty aldehyde + NAD(+) + H2O = a medium-chain fatty acid + NADH + 2 H(+). The catalysed reaction is hexadecanoate + NADH + 2 H(+) = hexadecanal + NAD(+) + H2O. It carries out the reaction octanal + NAD(+) + H2O = octanoate + NADH + 2 H(+). Its pathway is alcohol metabolism; ethanol degradation; acetate from ethanol: step 2/2. Oxidizes medium and long chain fatty aldehydes in lipid droplets into non-toxic fatty acids. The polypeptide is Aldehyde dehydrogenase family 3 member B2 (ALDH3B2) (Homo sapiens (Human)).